The sequence spans 115 residues: uncharacterized protein (115 aa).

The next 2 helical transmembrane spans lie at 11–31 (FLYL…LVWN) and 85–105 (GYII…YALI).

The protein to M.thermoautotrophicum MTH1706.

The protein resides in the cell membrane. This is an uncharacterized protein from Methanocaldococcus jannaschii (strain ATCC 43067 / DSM 2661 / JAL-1 / JCM 10045 / NBRC 100440) (Methanococcus jannaschii).